The chain runs to 169 residues: Crossover junction endodeoxyribonuclease RuvC (169 aa).

Active-site residues include Asp11, Glu71, and Asp143. Residues Asp11, Glu71, and Asp143 each coordinate Mg(2+).

Belongs to the RuvC family. In terms of assembly, homodimer which binds Holliday junction (HJ) DNA. The HJ becomes 2-fold symmetrical on binding to RuvC with unstacked arms; it has a different conformation from HJ DNA in complex with RuvA. In the full resolvosome a probable DNA-RuvA(4)-RuvB(12)-RuvC(2) complex forms which resolves the HJ. Requires Mg(2+) as cofactor.

It localises to the cytoplasm. The catalysed reaction is Endonucleolytic cleavage at a junction such as a reciprocal single-stranded crossover between two homologous DNA duplexes (Holliday junction).. Functionally, the RuvA-RuvB-RuvC complex processes Holliday junction (HJ) DNA during genetic recombination and DNA repair. Endonuclease that resolves HJ intermediates. Cleaves cruciform DNA by making single-stranded nicks across the HJ at symmetrical positions within the homologous arms, yielding a 5'-phosphate and a 3'-hydroxyl group; requires a central core of homology in the junction. The consensus cleavage sequence is 5'-(A/T)TT(C/G)-3'. Cleavage occurs on the 3'-side of the TT dinucleotide at the point of strand exchange. HJ branch migration catalyzed by RuvA-RuvB allows RuvC to scan DNA until it finds its consensus sequence, where it cleaves and resolves the cruciform DNA. The protein is Crossover junction endodeoxyribonuclease RuvC of Bartonella henselae (strain ATCC 49882 / DSM 28221 / CCUG 30454 / Houston 1) (Rochalimaea henselae).